The chain runs to 520 residues: Solute carrier family 2, facilitated glucose transporter member 14 (520 aa).

The Cytoplasmic portion of the chain corresponds to 1-29; sequence MEFHNGGHVSGIGGFLVSLTSRMKPHTLA. Residues 30–50 form a helical membrane-spanning segment; the sequence is VTPALIFAITVATIGSFQFGY. Topologically, residues 51-88 are extracellular; that stretch reads NTGVINAPETIIKEFINKTLTDKANAPPSEVLLTNLWS. Asparagine 67 carries N-linked (GlcNAc...) asparagine glycosylation. Residues 89–109 form a helical membrane-spanning segment; the sequence is LSVAIFSVGGMIGSFSVGLFV. Topologically, residues 110–117 are cytoplasmic; sequence NRFGRRNS. A helical transmembrane segment spans residues 118–138; the sequence is MLIVNLLAATGGCLMGLCKIA. Over 139–148 the chain is Extracellular; it reads ESVEMLILGR. A helical transmembrane segment spans residues 149-169; sequence LVIGLFCGLCTGFVPMYIGEI. The Cytoplasmic portion of the chain corresponds to 170-177; it reads SPTALRGA. A helical membrane pass occupies residues 178-198; sequence FGTLNQLGIVIGILVAQIFGL. A D-glucose-binding site is contributed by glutamine 183. The Extracellular segment spans residues 199 to 207; that stretch reads ELILGSEEL. The chain crosses the membrane as a helical span at residues 208–228; the sequence is WPVLLGFTILPAILQSAALPC. Topologically, residues 229–293 are cytoplasmic; the sequence is CPESPRFLLI…LFRVSSYRQP (65 aa). Residues 294-314 form a helical membrane-spanning segment; that stretch reads IIISIVLQLSQQLSGINAVFY. Residues 304-305 and asparagine 310 contribute to the D-glucose site; that span reads QQ. Topologically, residues 315-328 are extracellular; sequence YSTGIFKDAGVQQP. The chain crosses the membrane as a helical span at residues 329–349; the sequence is IYATISAGVVNTIFTLLSLFL. Asparagine 339 contacts D-glucose. The Cytoplasmic portion of the chain corresponds to 350–358; sequence VERAGRRTL. A helical membrane pass occupies residues 359-379; that stretch reads HMIGLGGMAFCSTLMTVSLLL. The Extracellular segment spans residues 380–392; the sequence is KNHYNGMSFVCIG. A helical transmembrane segment spans residues 393–413; the sequence is AILVFVACFEIGPGPIPWFIV. D-glucose is bound by residues glutamate 402 and tryptophan 410. The Cytoplasmic segment spans residues 414–423; it reads AELFSQGPRP. A helical membrane pass occupies residues 424 to 444; it reads AAMAVAGCSNWTSNFLVGLLF. Topologically, residues 445 to 451 are extracellular; the sequence is PSAAYYL. A helical transmembrane segment spans residues 452-472; the sequence is GAYVFIIFTGFLITFLAFTFF. The Cytoplasmic segment spans residues 473 to 520; that stretch reads KVPETRGRTFEDITRAFEGQAHGADRSGKDGVMGMNSIEPAKETTTNV. Positions 493-520 are disordered; the sequence is AHGADRSGKDGVMGMNSIEPAKETTTNV.

This sequence belongs to the major facilitator superfamily. Sugar transporter (TC 2.A.1.1) family. Glucose transporter subfamily. As to expression, mainly expressed in testis. Also expressed in small intestine, liver and kidney.

The protein resides in the cell membrane. It carries out the reaction D-glucose(out) = D-glucose(in). The catalysed reaction is L-dehydroascorbate(out) = L-dehydroascorbate(in). Its function is as follows. Hexose transporter that can mediate the transport of glucose and dehydroascorbate across the cell membrane. In Homo sapiens (Human), this protein is Solute carrier family 2, facilitated glucose transporter member 14.